The primary structure comprises 144 residues: Flagellar assembly factor FliW (144 aa).

It belongs to the FliW family. As to quaternary structure, interacts with translational regulator CsrA and flagellin(s).

It localises to the cytoplasm. Functionally, acts as an anti-CsrA protein, binds CsrA and prevents it from repressing translation of its target genes, one of which is flagellin. Binds to flagellin and participates in the assembly of the flagellum. The protein is Flagellar assembly factor FliW of Bacillus pumilus (strain SAFR-032).